The chain runs to 112 residues: Protein Churchill (112 aa).

Residues Cys-2, Cys-5, Cys-30, Cys-33, His-59, Cys-61, Cys-64, His-66, His-71, Cys-88, and Cys-91 each contribute to the Zn(2+) site.

Belongs to the Churchill family.

Its function is as follows. Transcriptional activator that mediates FGF signaling during neural development. Plays a role in the regulation of cell movement. Does not bind DNA by itself. This is Protein Churchill (CHURC1) from Bos taurus (Bovine).